Reading from the N-terminus, the 496-residue chain is Isocitrate dehydrogenase [NADP] (496 aa).

Residues L88 and T90 each coordinate NADP(+). S98, N100, R104, R114, and R137 together coordinate D-threo-isocitrate. NADP(+)-binding residues include N193, Q229, and K232. A Mg(2+)-binding site is contributed by D248. NADP(+)-binding residues include E277, G281, S282, A283, K285, Y286, and N293.

This sequence belongs to the isocitrate and isopropylmalate dehydrogenases family. Homodimer. Requires Mg(2+) as cofactor. It depends on Mn(2+) as a cofactor.

The catalysed reaction is D-threo-isocitrate + NADP(+) = 2-oxoglutarate + CO2 + NADPH. Its function is as follows. Catalyzes the oxidative decarboxylation of isocitrate to 2-oxoglutarate and carbon dioxide with the concomitant reduction of NADP(+). The chain is Isocitrate dehydrogenase [NADP] (icd) from Thermus thermophilus (strain ATCC 27634 / DSM 579 / HB8).